The sequence spans 224 residues: Orotate phosphoribosyltransferase (224 aa).

Lysine 29 is a binding site for 5-phospho-alpha-D-ribose 1-diphosphate. 37–38 (FF) is a binding site for orotate. 5-phospho-alpha-D-ribose 1-diphosphate-binding positions include 75–76 (YK), arginine 105, lysine 106, lysine 109, histidine 111, and 130–138 (DDVITAGTS). 2 residues coordinate orotate: threonine 134 and arginine 162.

It belongs to the purine/pyrimidine phosphoribosyltransferase family. PyrE subfamily. In terms of assembly, homodimer. Mg(2+) serves as cofactor.

It carries out the reaction orotidine 5'-phosphate + diphosphate = orotate + 5-phospho-alpha-D-ribose 1-diphosphate. It functions in the pathway pyrimidine metabolism; UMP biosynthesis via de novo pathway; UMP from orotate: step 1/2. Functionally, catalyzes the transfer of a ribosyl phosphate group from 5-phosphoribose 1-diphosphate to orotate, leading to the formation of orotidine monophosphate (OMP). In Bordetella parapertussis (strain 12822 / ATCC BAA-587 / NCTC 13253), this protein is Orotate phosphoribosyltransferase.